The following is a 367-amino-acid chain: B2 bradykinin receptor (367 aa).

Residues M1–Q36 are Extracellular-facing. Residues N3 and N14 are each glycosylated (N-linked (GlcNAc...) asparagine). A helical transmembrane segment spans residues A37 to L60. Residues H61–E69 lie on the Cytoplasmic side of the membrane. Residues I70 to A94 form a helical membrane-spanning segment. Over N95–R107 the chain is Extracellular. A disulfide bridge links C106 with C187. Residues V108–I129 traverse the membrane as a helical segment. Residues D130–K151 lie on the Cytoplasmic side of the membrane. Position 132 is a phosphotyrosine (Y132). Residues L152–M174 traverse the membrane as a helical segment. At H175–M197 the chain is on the extracellular side. A glycan (N-linked (GlcNAc...) asparagine) is linked at N183. A helical transmembrane segment spans residues V198–L224. Topologically, residues Q225–K243 are cytoplasmic. Residues A244 to L268 form a helical membrane-spanning segment. Residues D269–D287 are Extracellular-facing. A helical membrane pass occupies residues V288–V311. The Cytoplasmic segment spans residues G312–Q367. A Phosphotyrosine modification is found at Y323. The S-palmitoyl cysteine moiety is linked to residue C327. Position 342 is a phosphoserine (S342). At T345 the chain carries Phosphothreonine. 2 positions are modified to phosphoserine; by GRK6: S349 and S351.

The protein belongs to the G-protein coupled receptor 1 family. Bradykinin receptor subfamily. BDKRB2 sub-subfamily. In terms of assembly, forms a complex with PECAM1 and GNAQ. Interacts with PECAM1.

The protein localises to the cell membrane. Receptor for bradykinin. It is associated with G proteins that activate a phosphatidylinositol-calcium second messenger system. The sequence is that of B2 bradykinin receptor (BDKRB2) from Sus scrofa (Pig).